The primary structure comprises 375 residues: Succinyl-diaminopimelate desuccinylase (375 aa).

Position 66 (His-66) interacts with Zn(2+). Asp-68 is a catalytic residue. Residue Asp-99 coordinates Zn(2+). Glu-133 functions as the Proton acceptor in the catalytic mechanism. The Zn(2+) site is built by Glu-134, Glu-162, and His-348.

This sequence belongs to the peptidase M20A family. DapE subfamily. In terms of assembly, homodimer. It depends on Zn(2+) as a cofactor. Co(2+) serves as cofactor.

It carries out the reaction N-succinyl-(2S,6S)-2,6-diaminopimelate + H2O = (2S,6S)-2,6-diaminopimelate + succinate. It participates in amino-acid biosynthesis; L-lysine biosynthesis via DAP pathway; LL-2,6-diaminopimelate from (S)-tetrahydrodipicolinate (succinylase route): step 3/3. Its function is as follows. Catalyzes the hydrolysis of N-succinyl-L,L-diaminopimelic acid (SDAP), forming succinate and LL-2,6-diaminopimelate (DAP), an intermediate involved in the bacterial biosynthesis of lysine and meso-diaminopimelic acid, an essential component of bacterial cell walls. The protein is Succinyl-diaminopimelate desuccinylase of Photorhabdus laumondii subsp. laumondii (strain DSM 15139 / CIP 105565 / TT01) (Photorhabdus luminescens subsp. laumondii).